Reading from the N-terminus, the 207-residue chain is Large ribosomal subunit protein bL25 (207 aa).

Belongs to the bacterial ribosomal protein bL25 family. CTC subfamily. As to quaternary structure, part of the 50S ribosomal subunit; part of the 5S rRNA/L5/L18/L25 subcomplex. Contacts the 5S rRNA. Binds to the 5S rRNA independently of L5 and L18.

Its function is as follows. This is one of the proteins that binds to the 5S RNA in the ribosome where it forms part of the central protuberance. This is Large ribosomal subunit protein bL25 from Dictyoglomus thermophilum (strain ATCC 35947 / DSM 3960 / H-6-12).